The following is a 202-amino-acid chain: uncharacterized protein (202 aa).

Positions 14–74 (NAKTERILDV…AMADRYFQRC (61 aa)) constitute an HTH tetR-type domain.

This is an uncharacterized protein from Xanthobacter autotrophicus.